The sequence spans 667 residues: Cyclin-dependent kinase 17 (667 aa).

2 disordered regions span residues 1-70 and 85-184; these read MTAY…SSLN and DSEY…LRKM. 2 stretches are compositionally biased toward acidic residues: residues 99–111 and 119–144; these read EDFD…EFED and DEDD…ITPE. Residues 151-164 show a composition bias toward polar residues; sequence TGVTTQTTPPSNNT. A Protein kinase domain is found at 328–609; the sequence is YEKLDKLGEG…AAEAVKHPFL (282 aa). Residues 334-342 and lysine 357 contribute to the ATP site; that span reads LGEGTYATV. Catalysis depends on aspartate 449, which acts as the Proton acceptor. Mg(2+) is bound by residues asparagine 454 and aspartate 467. Positions 642–667 are disordered; the sequence is HHHSSRRHHRGTLVKDKYRMHSSHHT. The segment covering 644–653 has biased composition (basic residues); that stretch reads HSSRRHHRGT.

It belongs to the protein kinase superfamily. CMGC Ser/Thr protein kinase family. CDC2/CDKX subfamily. As to quaternary structure, interacts with cyy-1; the interaction is required to activate pct-1. Mg(2+) serves as cofactor.

The protein localises to the cytoplasm. It localises to the cell projection. Its subcellular location is the dendrite. The protein resides in the axon. The enzyme catalyses L-seryl-[protein] + ATP = O-phospho-L-seryl-[protein] + ADP + H(+). It catalyses the reaction L-threonyl-[protein] + ATP = O-phospho-L-threonyl-[protein] + ADP + H(+). Its function is as follows. Serine/threonine-protein kinase, which, in association with cyy-1, regulates the trafficking of synaptic vesicles in the DA9 motor neuron and probably also in the DD motor neurons and in RIA interneurons. Sufficient for synaptic vesicle trafficking in the DA9 motor neuron. The chain is Cyclin-dependent kinase 17 from Caenorhabditis elegans.